The chain runs to 306 residues: Ribosomal RNA small subunit methyltransferase A (306 aa).

N37, V39, G64, E85, D115, and N134 together coordinate S-adenosyl-L-methionine.

The protein belongs to the class I-like SAM-binding methyltransferase superfamily. rRNA adenine N(6)-methyltransferase family. RsmA subfamily.

Its subcellular location is the cytoplasm. It carries out the reaction adenosine(1518)/adenosine(1519) in 16S rRNA + 4 S-adenosyl-L-methionine = N(6)-dimethyladenosine(1518)/N(6)-dimethyladenosine(1519) in 16S rRNA + 4 S-adenosyl-L-homocysteine + 4 H(+). In terms of biological role, specifically dimethylates two adjacent adenosines (A1518 and A1519) in the loop of a conserved hairpin near the 3'-end of 16S rRNA in the 30S particle. May play a critical role in biogenesis of 30S subunits. In Mycobacterium leprae (strain Br4923), this protein is Ribosomal RNA small subunit methyltransferase A.